The chain runs to 33 residues: Brevinin-2Rh (33 aa).

Cys27 and Cys33 are oxidised to a cystine.

In terms of tissue distribution, expressed by the skin glands.

The protein resides in the secreted. In terms of biological role, antimicrobial peptide. In Pelophylax ridibundus (Marsh frog), this protein is Brevinin-2Rh.